An 884-amino-acid polypeptide reads, in one-letter code: Protein argonaute-4 (884 aa).

In terms of domain architecture, PAZ spans 242–361 (PVIEFMCEVL…LPLEVCNIVA (120 aa)). Positions 532–843 (LIVVILPGKT…VAFRARYHLV (312 aa)) constitute a Piwi domain. Residues 848-870 (DSAEGSHVSGQSNGRDPQALAKA) are disordered.

It belongs to the argonaute family. Ago subfamily.

Its subcellular location is the cytoplasm. It localises to the P-body. Its function is as follows. Required for RNA-mediated gene silencing (RNAi). Binds to short RNAs such as microRNAs (miRNAs) and represses the translation of mRNAs which are complementary to them. Lacks endonuclease activity and does not appear to cleave target mRNAs. The protein is Protein argonaute-4 (ago4) of Xenopus laevis (African clawed frog).